The sequence spans 476 residues: Aspartyl/glutamyl-tRNA(Asn/Gln) amidotransferase subunit B (476 aa).

It belongs to the GatB/GatE family. GatB subfamily. As to quaternary structure, heterotrimer of A, B and C subunits.

It catalyses the reaction L-glutamyl-tRNA(Gln) + L-glutamine + ATP + H2O = L-glutaminyl-tRNA(Gln) + L-glutamate + ADP + phosphate + H(+). The catalysed reaction is L-aspartyl-tRNA(Asn) + L-glutamine + ATP + H2O = L-asparaginyl-tRNA(Asn) + L-glutamate + ADP + phosphate + 2 H(+). Allows the formation of correctly charged Asn-tRNA(Asn) or Gln-tRNA(Gln) through the transamidation of misacylated Asp-tRNA(Asn) or Glu-tRNA(Gln) in organisms which lack either or both of asparaginyl-tRNA or glutaminyl-tRNA synthetases. The reaction takes place in the presence of glutamine and ATP through an activated phospho-Asp-tRNA(Asn) or phospho-Glu-tRNA(Gln). The protein is Aspartyl/glutamyl-tRNA(Asn/Gln) amidotransferase subunit B of Clostridium botulinum (strain Eklund 17B / Type B).